A 1641-amino-acid chain; its full sequence is Vitellogenin-1 (1641 aa).

The signal sequence occupies residues 1–18 (MWYLAFLLIIGAYAADHA). The Vitellogenin domain occupies 19-790 (WETGNEYHYL…SQDTTVPKSS (772 aa)). Cys-172 and Cys-211 are oxidised to a cystine. A compositionally biased stretch (polar residues) spans 322–334 (LRQPSVSLNSMEA). The disordered stretch occupies residues 322-372 (LRQPSVSLNSMEARSSENSNEENRSDDDRSNFLSNSGEEREYLQSKPTLNE). Residues 342 to 351 (EENRSDDDRS) are compositionally biased toward basic and acidic residues. Residues Asn-344, Asn-549, Asn-566, Asn-831, Asn-875, Asn-898, Asn-1001, Asn-1053, Asn-1268, Asn-1393, Asn-1396, Asn-1505, and Asn-1523 are each glycosylated (N-linked (GlcNAc...) asparagine). Residues 1410 to 1597 (ESVCVLDKTH…TYAMTQESCQ (188 aa)) enclose the VWFD domain. Residues Cys-1435 and Cys-1596 are joined by a disulfide bond. The segment at 1594 to 1641 (ESCQGPAPENKRKAEQSTCMSRSYRPSDVISDREAGRSSTKNRGWGYH) is disordered.

As to expression, hemolymph.

It localises to the secreted. Its function is as follows. Precursor of the egg-yolk proteins that are sources of nutrients during embryonic development. The sequence is that of Vitellogenin-1 from Solenopsis invicta (Red imported fire ant).